The following is a 501-amino-acid chain: Aldehyde dehydrogenase 1A1 (501 aa).

The residue at position 2 (serine 2) is an N-acetylserine. Residues lysine 91 and lysine 128 each carry the N6-acetyllysine modification. NAD(+) is bound by residues 167-170 (IPWN), 193-196 (KPAE), 226-227 (GP), and 246-247 (GS). N6-acetyllysine is present on lysine 252. Catalysis depends on glutamate 269, which acts as the Proton acceptor. NAD(+) is bound at residue 269–271 (ELG). The active-site Nucleophile is the cysteine 303. The interval 336 to 501 (LTPGVSQGPQ…VTIKISQKNS (166 aa)) is mediates interaction with PRMT3. Threonine 337 carries the phosphothreonine modification. 349-353 (EQYEK) is an NAD(+) binding site. An N6-acetyllysine mark is found at lysine 353 and lysine 367. An NAD(+)-binding site is contributed by 400-402 (EIF). The residue at position 410 (lysine 410) is an N6-acetyllysine. Serine 413 carries the phosphoserine modification. Residues lysine 419 and lysine 495 each carry the N6-acetyllysine modification.

The protein belongs to the aldehyde dehydrogenase family. Homotetramer. Interacts with PRMT3; the interaction is direct, inhibits ALDH1A1 aldehyde dehydrogenase activity and is independent of the methyltransferase activity of PRMT3. In terms of processing, the N-terminus is blocked most probably by acetylation.

It localises to the cytoplasm. The protein localises to the cytosol. Its subcellular location is the cell projection. It is found in the axon. It carries out the reaction an aldehyde + NAD(+) + H2O = a carboxylate + NADH + 2 H(+). The enzyme catalyses all-trans-retinal + NAD(+) + H2O = all-trans-retinoate + NADH + 2 H(+). The catalysed reaction is 9-cis-retinal + NAD(+) + H2O = 9-cis-retinoate + NADH + 2 H(+). It catalyses the reaction 11-cis-retinal + NAD(+) + H2O = 11-cis-retinoate + NADH + 2 H(+). It carries out the reaction 13-cis-retinal + NAD(+) + H2O = 13-cis-retinoate + NADH + 2 H(+). The enzyme catalyses 3-deoxyglucosone + NAD(+) + H2O = 2-dehydro-3-deoxy-D-gluconate + NADH + 2 H(+). The catalysed reaction is (E)-4-hydroxynon-2-enal + NAD(+) + H2O = (E)-4-hydroxynon-2-enoate + NADH + 2 H(+). It catalyses the reaction malonaldehyde + NAD(+) + H2O = 3-oxopropanoate + NADH + 2 H(+). It carries out the reaction hexanal + NAD(+) + H2O = hexanoate + NADH + 2 H(+). The enzyme catalyses propanal + NAD(+) + H2O = propanoate + NADH + 2 H(+). The catalysed reaction is acetaldehyde + NAD(+) + H2O = acetate + NADH + 2 H(+). It catalyses the reaction benzaldehyde + NAD(+) + H2O = benzoate + NADH + 2 H(+). It carries out the reaction 4-aminobutanal + NAD(+) + H2O = 4-aminobutanoate + NADH + 2 H(+). It functions in the pathway cofactor metabolism; retinol metabolism. Its activity is regulated as follows. Inhibited by duocarmycin analogs. Cytosolic dehydrogenase that catalyzes the irreversible oxidation of a wide range of aldehydes to their corresponding carboxylic acid. Functions downstream of retinol dehydrogenases and catalyzes the oxidation of retinaldehyde into retinoic acid, the second step in the oxidation of retinol/vitamin A into retinoic acid. This pathway is crucial to control the levels of retinol and retinoic acid, two important molecules which excess can be teratogenic and cytotoxic. Also oxidizes aldehydes resulting from lipid peroxidation like (E)-4-hydroxynon-2-enal/HNE, malonaldehyde and hexanal that form protein adducts and are highly cytotoxic. By participating for instance to the clearance of (E)-4-hydroxynon-2-enal/HNE in the lens epithelium prevents the formation of HNE-protein adducts and lens opacification. Also functions downstream of fructosamine-3-kinase in the fructosamine degradation pathway by catalyzing the oxidation of 3-deoxyglucosone, the carbohydrate product of fructosamine 3-phosphate decomposition, which is itself a potent glycating agent that may react with lysine and arginine side-chains of proteins. Also has an aminobutyraldehyde dehydrogenase activity and is probably part of an alternative pathway for the biosynthesis of GABA/4-aminobutanoate in midbrain, thereby playing a role in GABAergic synaptic transmission. The protein is Aldehyde dehydrogenase 1A1 of Ovis aries (Sheep).